The sequence spans 236 residues: 2-C-methyl-D-erythritol 4-phosphate cytidylyltransferase (236 aa).

This sequence belongs to the IspD/TarI cytidylyltransferase family. IspD subfamily.

The catalysed reaction is 2-C-methyl-D-erythritol 4-phosphate + CTP + H(+) = 4-CDP-2-C-methyl-D-erythritol + diphosphate. Its pathway is isoprenoid biosynthesis; isopentenyl diphosphate biosynthesis via DXP pathway; isopentenyl diphosphate from 1-deoxy-D-xylulose 5-phosphate: step 2/6. Functionally, catalyzes the formation of 4-diphosphocytidyl-2-C-methyl-D-erythritol from CTP and 2-C-methyl-D-erythritol 4-phosphate (MEP). This Azoarcus sp. (strain BH72) protein is 2-C-methyl-D-erythritol 4-phosphate cytidylyltransferase.